Consider the following 455-residue polypeptide: Argininosuccinate lyase (455 aa).

It belongs to the lyase 1 family. Argininosuccinate lyase subfamily.

The protein resides in the cytoplasm. It catalyses the reaction 2-(N(omega)-L-arginino)succinate = fumarate + L-arginine. It participates in amino-acid biosynthesis; L-arginine biosynthesis; L-arginine from L-ornithine and carbamoyl phosphate: step 3/3. The sequence is that of Argininosuccinate lyase from Shewanella baltica (strain OS223).